Reading from the N-terminus, the 196-residue chain is Glycerol-3-phosphate acyltransferase (196 aa).

Helical transmembrane passes span 1 to 21, 53 to 73, 76 to 96, 115 to 135, and 141 to 161; these read MGFI…SILF, KYGA…AILD, YIDP…IGHI, VVFG…AFVF, and VSLA…EGDF.

This sequence belongs to the PlsY family. Probably interacts with PlsX.

The protein localises to the cell inner membrane. The enzyme catalyses an acyl phosphate + sn-glycerol 3-phosphate = a 1-acyl-sn-glycero-3-phosphate + phosphate. The protein operates within lipid metabolism; phospholipid metabolism. Its function is as follows. Catalyzes the transfer of an acyl group from acyl-phosphate (acyl-PO(4)) to glycerol-3-phosphate (G3P) to form lysophosphatidic acid (LPA). This enzyme utilizes acyl-phosphate as fatty acyl donor, but not acyl-CoA or acyl-ACP. In Hydrogenobaculum sp. (strain Y04AAS1), this protein is Glycerol-3-phosphate acyltransferase.